The sequence spans 134 residues: Profilin-2 (134 aa).

Cysteines 13 and 118 form a disulfide. Residues 84-100 carry the Involved in PIP2 interaction motif; the sequence is AVIRGKKGSGGITIKKT. Phosphothreonine is present on Thr-114.

This sequence belongs to the profilin family. As to quaternary structure, occurs in many kinds of cells as a complex with monomeric actin in a 1:1 ratio. In terms of processing, phosphorylated by MAP kinases.

It localises to the cytoplasm. The protein resides in the cytoskeleton. Binds to actin and affects the structure of the cytoskeleton. At high concentrations, profilin prevents the polymerization of actin, whereas it enhances it at low concentrations. This chain is Profilin-2, found in Olea europaea (Common olive).